The following is a 145-amino-acid chain: Transcription antitermination protein NusB (145 aa).

The protein belongs to the NusB family.

Involved in transcription antitermination. Required for transcription of ribosomal RNA (rRNA) genes. Binds specifically to the boxA antiterminator sequence of the ribosomal RNA (rrn) operons. This is Transcription antitermination protein NusB from Burkholderia ambifaria (strain MC40-6).